A 74-amino-acid polypeptide reads, in one-letter code: Exodeoxyribonuclease 7 small subunit (74 aa).

This sequence belongs to the XseB family. As to quaternary structure, heterooligomer composed of large and small subunits.

It localises to the cytoplasm. The enzyme catalyses Exonucleolytic cleavage in either 5'- to 3'- or 3'- to 5'-direction to yield nucleoside 5'-phosphates.. Functionally, bidirectionally degrades single-stranded DNA into large acid-insoluble oligonucleotides, which are then degraded further into small acid-soluble oligonucleotides. The chain is Exodeoxyribonuclease 7 small subunit from Ruthia magnifica subsp. Calyptogena magnifica.